The following is a 363-amino-acid chain: Replication factor C subunit 4 (363 aa).

Met-1 bears the N-acetylmethionine mark. Positions 1–36 (MQAFLKGTSISTKPPLTKDRGVAASAGSSGENKKAK) are disordered. N6-acetyllysine is present on residues Lys-6 and Lys-13. Residue 78-85 (GPPGTGKT) coordinates ATP.

The protein belongs to the activator 1 small subunits family. As to quaternary structure, subunit of the RFC complex, an heteropentameric complex consisting of a large subunit RFC1 and four small subunits RFC2, RFC3, RFC4 and RFC5; the RFC complex interacts with PCNA. Forms an heterotetrameric complex with RFC2, RFC3 and RFC5; this complex has ATPase activity but is not stimulated by PCNA. The heterotetramer of subunits RFC2, RFC3, RFC4 and RFC5 interacts with RAD17. Interacts with ATAD5. Interacts with CTF18. Interacts with CNTD1; this interaction facilitates crossover formation.

It is found in the nucleus. Functionally, subunit of the replication factor C (RFC) complex which acts during elongation of primed DNA templates by DNA polymerases delta and epsilon, and is necessary for ATP-dependent loading of proliferating cell nuclear antigen (PCNA) onto primed DNA. The RFC4 subunit probably functions as a scaffold on which the other complex components can assemble. This Homo sapiens (Human) protein is Replication factor C subunit 4 (RFC4).